Reading from the N-terminus, the 125-residue chain is Subtelomeric hrmA-associated cluster protein cgnA (125 aa).

G-Q-I/R/S repeat units follow at residues G11–I13, G14–I16, G17–R19, G20–S22, G23–R25, G26–S28, G29–R31, G32–S34, G35–I37, G38–S40, G41–S43, G44–S46, G47–S49, G50–S52, G53–I55, G56–I58, G59–I61, G62–I64, G65–I67, G68–I70, G71–I73, G74–I76, and G77–A79. The 23 X 3 AA approximate tandem repeats of G-Q-I/R/S stretch occupies residues G11 to A79. Residues P15 to Q57 are disordered.

It is found in the secreted. Its function is as follows. Hypoxia responsive morphology factor that modulates the expression of the subtelomeric hrmA-associated cluster (HAC) containing genes that alter the hyphal surface (such as reduced total chitin or increased beta-glucan exposure) and perturb inter-hyphal interactions within the developing biofilms, resulting in a loss of vertically aligned polarized growing filaments. Consequently, this hypoxia-typic morphotype (called H-MORPH) with altered biofilm architecture leads to increased hypoxia fitness, increased host inflammation, rapid disease progression, and mortality in a murine model of invasive aspergillosis. GcnA is directly involved in the reduction total surface chitin and the increase beta-glucan exposure, and mediates the detachment of the extracellular matrix and especially of its component galactosaminogalactan (GAG). This chain is Subtelomeric hrmA-associated cluster protein cgnA, found in Aspergillus fumigatus (strain CBS 144.89 / FGSC A1163 / CEA10) (Neosartorya fumigata).